Here is a 779-residue protein sequence, read N- to C-terminus: Beta-galactosidase 15 (779 aa).

The N-terminal stretch at 1–19 is a signal peptide; that stretch reads MVSLSFILCCVLVSSCAYA. N-linked (GlcNAc...) asparagine glycosylation occurs at Asn-148. The active-site Proton donor is Glu-178. Glu-247 functions as the Nucleophile in the catalytic mechanism. Residues Asn-248, Asn-345, Asn-374, Asn-489, Asn-495, and Asn-555 are each glycosylated (N-linked (GlcNAc...) asparagine). An SUEL-type lectin domain is found at 694–779; sequence VYEKNVLELS…AKRLAVEAIC (86 aa).

This sequence belongs to the glycosyl hydrolase 35 family. Ubiquitous, with higher levels in roots and siliques.

Its subcellular location is the secreted. The protein localises to the extracellular space. It is found in the apoplast. The enzyme catalyses Hydrolysis of terminal non-reducing beta-D-galactose residues in beta-D-galactosides.. This is Beta-galactosidase 15 (BGAL15) from Arabidopsis thaliana (Mouse-ear cress).